A 109-amino-acid polypeptide reads, in one-letter code: Iron-sulfur cluster assembly protein CyaY (109 aa).

This sequence belongs to the frataxin family.

Involved in iron-sulfur (Fe-S) cluster assembly. May act as a regulator of Fe-S biogenesis. The protein is Iron-sulfur cluster assembly protein CyaY of Bordetella avium (strain 197N).